We begin with the raw amino-acid sequence, 125 residues long: Large ribosomal subunit protein bL12 (125 aa).

In terms of assembly, homodimer. Part of the ribosomal stalk of the 50S ribosomal subunit. Forms a multimeric L10(L12)X complex, where L10 forms an elongated spine to which 2 to 4 L12 dimers bind in a sequential fashion. Binds GTP-bound translation factors. In terms of processing, two isoforms seem to exist. One is probably dimethylated on Lys-69 and monomethylated on Lys-86 while the other is probably acetylated or trimethylated on both Lys-86 and Lys-89.

Forms part of the ribosomal stalk which helps the ribosome interact with GTP-bound translation factors. Is thus essential for accurate translation. This Rhodopseudomonas palustris (strain ATCC BAA-98 / CGA009) protein is Large ribosomal subunit protein bL12.